The sequence spans 340 residues: Phosphoribosylformylglycinamidine cyclo-ligase (340 aa).

It belongs to the AIR synthase family.

The protein resides in the cytoplasm. It catalyses the reaction 2-formamido-N(1)-(5-O-phospho-beta-D-ribosyl)acetamidine + ATP = 5-amino-1-(5-phospho-beta-D-ribosyl)imidazole + ADP + phosphate + H(+). The protein operates within purine metabolism; IMP biosynthesis via de novo pathway; 5-amino-1-(5-phospho-D-ribosyl)imidazole from N(2)-formyl-N(1)-(5-phospho-D-ribosyl)glycinamide: step 2/2. The protein is Phosphoribosylformylglycinamidine cyclo-ligase of Macrococcus caseolyticus (strain JCSC5402) (Macrococcoides caseolyticum).